The primary structure comprises 542 residues: Aminotriazole resistance protein (542 aa).

The Cytoplasmic portion of the chain corresponds to 1 to 108 (MGNQSLVVLT…SFGSEGNSKS (108 aa)). Residues 109 to 129 (WLMASFPLVSGSFILISGRLG) form a helical membrane-spanning segment. Topologically, residues 130 to 136 (DIYGLKK) are extracellular. A helical membrane pass occupies residues 137–157 (MLLVGYVLVIIWSLICGITKY). Topologically, residues 158–172 (SGSDTFFIISRAFQG) are cytoplasmic. A helical membrane pass occupies residues 173-193 (LGIAFVLPNVLGIIGNIYVGG). Over 194–198 (TFRKN) the chain is Extracellular. The helical transmembrane segment at 199–219 (IVISFVGAMAPIGATLGCLFA) threads the bilayer. Topologically, residues 220-231 (GLIGTEDPKQWP) are cytoplasmic. The chain crosses the membrane as a helical span at residues 232–252 (WAFYAYSIAAFINFVLSIYAI). The Extracellular portion of the chain corresponds to 253–262 (PSTIPTNIHH). Residues 263-283 (FSMDWIGSVLGVIGLILLNFV) traverse the membrane as a helical segment. The Cytoplasmic portion of the chain corresponds to 284 to 295 (WNQAPISGWNQA). Residues 296–316 (YIIVILIISVIFLVVFIIYEI) form a helical membrane-spanning segment. The Extracellular portion of the chain corresponds to 317-333 (RFAKTPLLPRAVIKDRH). Residues 334-354 (MIQIMLALFFGWGSFGIFTFY) form a helical membrane-spanning segment. Over 355 to 371 (YFQFQLNIRQYTALWAG) the chain is Cytoplasmic. Residues 372–392 (GTYFMFLIWGIIAALLVGFTI) form a helical membrane-spanning segment. Residues 393–399 (KNVSPSV) lie on the Extracellular side of the membrane. The chain crosses the membrane as a helical span at residues 400–420 (FLFFSMVAFNVGSIMASVTPV). Residues 421–429 (HETYFRTQL) are Cytoplasmic-facing. A helical membrane pass occupies residues 430–450 (GTMIILSFGMDLSFPASSIIF). Residues 451–505 (SDNLPMEYQGMAGSLVNTVVNYSMSLCLGMGATVETQVNSDGKHLLKGYRGAQYL) lie on the Extracellular side of the membrane. N-linked (GlcNAc...) asparagine glycosylation occurs at Asn471. A helical membrane pass occupies residues 506–526 (GIGLASLACMISGLYMVESFI). Over 527–542 (KGRRARAAAEYDCTVA) the chain is Cytoplasmic.

It belongs to the major facilitator superfamily.

The protein localises to the membrane. Its function is as follows. Putative component of the machinery responsible for pumping aminotriazole (and possibly other toxic compounds) out of the cell. Probable ATP-dependent export permease. Appears to confer resistance only to aminotriazole. In Saccharomyces cerevisiae (strain ATCC 204508 / S288c) (Baker's yeast), this protein is Aminotriazole resistance protein (ATR1).